Reading from the N-terminus, the 278-residue chain is tRNA uridine(34) hydroxylase (278 aa).

A Rhodanese domain is found at Gln122–Ser216. Cys176 acts as the Cysteine persulfide intermediate in catalysis.

The protein belongs to the TrhO family.

It carries out the reaction uridine(34) in tRNA + AH2 + O2 = 5-hydroxyuridine(34) in tRNA + A + H2O. In terms of biological role, catalyzes oxygen-dependent 5-hydroxyuridine (ho5U) modification at position 34 in tRNAs. This Synechocystis sp. (strain ATCC 27184 / PCC 6803 / Kazusa) protein is tRNA uridine(34) hydroxylase.